The sequence spans 649 residues: 1-deoxy-D-xylulose-5-phosphate synthase 1 (649 aa).

Residues H73 and 113 to 115 (SHA) each bind thiamine diphosphate. Mg(2+) is bound at residue D144. Residues 145–146 (GA), N174, Y285, and E367 each bind thiamine diphosphate. N174 is a binding site for Mg(2+). Residues 623 to 649 (LLPGTGTRPGAQEYRPRMPLTDWSEPA) form a disordered region.

Belongs to the transketolase family. DXPS subfamily. As to quaternary structure, homodimer. The cofactor is Mg(2+). Requires thiamine diphosphate as cofactor.

It catalyses the reaction D-glyceraldehyde 3-phosphate + pyruvate + H(+) = 1-deoxy-D-xylulose 5-phosphate + CO2. Its pathway is metabolic intermediate biosynthesis; 1-deoxy-D-xylulose 5-phosphate biosynthesis; 1-deoxy-D-xylulose 5-phosphate from D-glyceraldehyde 3-phosphate and pyruvate: step 1/1. Functionally, catalyzes the acyloin condensation reaction between C atoms 2 and 3 of pyruvate and glyceraldehyde 3-phosphate to yield 1-deoxy-D-xylulose-5-phosphate (DXP). This is 1-deoxy-D-xylulose-5-phosphate synthase 1 from Kitasatospora griseola (Streptomyces griseolosporeus).